A 527-amino-acid polypeptide reads, in one-letter code: V(D)J recombination-activating protein 2 (527 aa).

The disordered stretch occupies residues Q359–D380. Over residues I361 to E370 the composition is skewed to polar residues. Residues D371–D380 are compositionally biased toward acidic residues. A PHD-type; atypical zinc finger spans residues W416–I484. Residues C419, C423, C446, H452, H455, C458, C478, and H481 each contribute to the Zn(2+) site. The interval T490–G511 is disordered.

This sequence belongs to the RAG2 family. In terms of assembly, component of the RAG complex composed of core components RAG1 and RAG2, and associated component HMGB1 or HMGB2. In terms of tissue distribution, maturing lymphoid cells.

Its subcellular location is the nucleus. Core component of the RAG complex, a multiprotein complex that mediates the DNA cleavage phase during V(D)J recombination. V(D)J recombination assembles a diverse repertoire of immunoglobulin and T-cell receptor genes in developing B and T-lymphocytes through rearrangement of different V (variable), in some cases D (diversity), and J (joining) gene segments. DNA cleavage by the RAG complex occurs in 2 steps: a first nick is introduced in the top strand immediately upstream of the heptamer, generating a 3'-hydroxyl group that can attack the phosphodiester bond on the opposite strand in a direct transesterification reaction, thereby creating 4 DNA ends: 2 hairpin coding ends and 2 blunt, 5'-phosphorylated ends. The chromatin structure plays an essential role in the V(D)J recombination reactions and the presence of histone H3 trimethylated at 'Lys-4' (H3K4me3) stimulates both the nicking and haipinning steps. The RAG complex also plays a role in pre-B cell allelic exclusion, a process leading to expression of a single immunoglobulin heavy chain allele to enforce clonality and monospecific recognition by the B-cell antigen receptor (BCR) expressed on individual B-lymphocytes. The introduction of DNA breaks by the RAG complex on one immunoglobulin allele induces ATM-dependent repositioning of the other allele to pericentromeric heterochromatin, preventing accessibility to the RAG complex and recombination of the second allele. In the RAG complex, RAG2 is not the catalytic component but is required for all known catalytic activities mediated by RAG1. It probably acts as a sensor of chromatin state that recruits the RAG complex to H3K4me3. In Mus musculus (Mouse), this protein is V(D)J recombination-activating protein 2 (Rag2).